Consider the following 420-residue polypeptide: Glutamyl-tRNA reductase (420 aa).

Substrate contacts are provided by residues 49 to 52 (TCNR), S109, 114 to 116 (EPQ), and Q120. Catalysis depends on C50, which acts as the Nucleophile. 189–194 (GAGETI) provides a ligand contact to NADP(+).

The protein belongs to the glutamyl-tRNA reductase family. As to quaternary structure, homodimer.

It carries out the reaction (S)-4-amino-5-oxopentanoate + tRNA(Glu) + NADP(+) = L-glutamyl-tRNA(Glu) + NADPH + H(+). It functions in the pathway porphyrin-containing compound metabolism; protoporphyrin-IX biosynthesis; 5-aminolevulinate from L-glutamyl-tRNA(Glu): step 1/2. In terms of biological role, catalyzes the NADPH-dependent reduction of glutamyl-tRNA(Glu) to glutamate 1-semialdehyde (GSA). The sequence is that of Glutamyl-tRNA reductase from Yersinia enterocolitica serotype O:8 / biotype 1B (strain NCTC 13174 / 8081).